Here is a 199-residue protein sequence, read N- to C-terminus: NADH-quinone oxidoreductase subunit C (199 aa).

It belongs to the complex I 30 kDa subunit family. NDH-1 is composed of 14 different subunits. Subunits NuoB, C, D, E, F, and G constitute the peripheral sector of the complex.

Its subcellular location is the cell inner membrane. The catalysed reaction is a quinone + NADH + 5 H(+)(in) = a quinol + NAD(+) + 4 H(+)(out). NDH-1 shuttles electrons from NADH, via FMN and iron-sulfur (Fe-S) centers, to quinones in the respiratory chain. The immediate electron acceptor for the enzyme in this species is believed to be ubiquinone. Couples the redox reaction to proton translocation (for every two electrons transferred, four hydrogen ions are translocated across the cytoplasmic membrane), and thus conserves the redox energy in a proton gradient. The protein is NADH-quinone oxidoreductase subunit C of Polynucleobacter necessarius subsp. necessarius (strain STIR1).